Reading from the N-terminus, the 465-residue chain is tRNA modification GTPase MnmE (465 aa).

Arginine 27, glutamate 91, and arginine 130 together coordinate (6S)-5-formyl-5,6,7,8-tetrahydrofolate. Residues 227–386 form the TrmE-type G domain; it reads GLSTAIIGRP…LEAKIADLFF (160 aa). Asparagine 237 serves as a coordination point for K(+). GTP is bound by residues 237–242, 256–262, and 281–284; these read NVGKSS, TDIAGTT, and DTAG. Serine 241 lines the Mg(2+) pocket. Positions 256, 258, and 261 each coordinate K(+). Mg(2+) is bound at residue threonine 262. Residue lysine 465 coordinates (6S)-5-formyl-5,6,7,8-tetrahydrofolate.

It belongs to the TRAFAC class TrmE-Era-EngA-EngB-Septin-like GTPase superfamily. TrmE GTPase family. Homodimer. Heterotetramer of two MnmE and two MnmG subunits. K(+) serves as cofactor.

The protein localises to the cytoplasm. Its function is as follows. Exhibits a very high intrinsic GTPase hydrolysis rate. Involved in the addition of a carboxymethylaminomethyl (cmnm) group at the wobble position (U34) of certain tRNAs, forming tRNA-cmnm(5)s(2)U34. This Enterococcus faecalis (strain ATCC 700802 / V583) protein is tRNA modification GTPase MnmE.